The following is a 513-amino-acid chain: ATP synthase subunit alpha (513 aa).

169–176 provides a ligand contact to ATP; it reads GDRQTGKT.

The protein belongs to the ATPase alpha/beta chains family. F-type ATPases have 2 components, CF(1) - the catalytic core - and CF(0) - the membrane proton channel. CF(1) has five subunits: alpha(3), beta(3), gamma(1), delta(1), epsilon(1). CF(0) has three main subunits: a(1), b(2) and c(9-12). The alpha and beta chains form an alternating ring which encloses part of the gamma chain. CF(1) is attached to CF(0) by a central stalk formed by the gamma and epsilon chains, while a peripheral stalk is formed by the delta and b chains.

Its subcellular location is the cell inner membrane. The catalysed reaction is ATP + H2O + 4 H(+)(in) = ADP + phosphate + 5 H(+)(out). Functionally, produces ATP from ADP in the presence of a proton gradient across the membrane. The alpha chain is a regulatory subunit. This Methylobacillus flagellatus (strain ATCC 51484 / DSM 6875 / VKM B-1610 / KT) protein is ATP synthase subunit alpha.